The following is a 407-amino-acid chain: Obg-like ATPase homolog (407 aa).

Residues 46-301 (LKIGIVGMPN…LTPEEAAQEC (256 aa)) form the OBG-type G domain. Residues 55–60 (NIGKST) and M249 each bind ATP. The TGS domain occupies 322–405 (NLIHYFTASE…EPGDIIFWKI (84 aa)).

The protein belongs to the TRAFAC class OBG-HflX-like GTPase superfamily. OBG GTPase family.

Hydrolyzes ATP, and can also hydrolyze GTP with lower efficiency. Has lower affinity for GTP. This Schizosaccharomyces pombe (strain 972 / ATCC 24843) (Fission yeast) protein is Obg-like ATPase homolog.